A 272-amino-acid chain; its full sequence is Type III pantothenate kinase (272 aa).

6–13 (DVRNTHTV) is an ATP binding site. A substrate-binding site is contributed by 109 to 112 (GADR). D111 functions as the Proton acceptor in the catalytic mechanism. D131 is a binding site for K(+). Residue S134 participates in ATP binding. T186 is a binding site for substrate.

This sequence belongs to the type III pantothenate kinase family. Homodimer. Requires NH4(+) as cofactor. It depends on K(+) as a cofactor.

It is found in the cytoplasm. The catalysed reaction is (R)-pantothenate + ATP = (R)-4'-phosphopantothenate + ADP + H(+). It participates in cofactor biosynthesis; coenzyme A biosynthesis; CoA from (R)-pantothenate: step 1/5. Catalyzes the phosphorylation of pantothenate (Pan), the first step in CoA biosynthesis. The sequence is that of Type III pantothenate kinase from Mycobacterium ulcerans (strain Agy99).